Consider the following 420-residue polypeptide: Tyrosine--tRNA ligase (420 aa).

Y39 is an L-tyrosine binding site. Residues 44–53 carry the 'HIGH' region motif; that stretch reads CTAPSLHIGS. Y176 and Q180 together coordinate L-tyrosine. The short motif at 236-240 is the 'KMSKS' region element; the sequence is KMGKT. ATP is bound at residue K239. The S4 RNA-binding domain maps to 349–414; that stretch reads IPLIDLLYDT…AGKKRHIKIL (66 aa).

It belongs to the class-I aminoacyl-tRNA synthetase family. TyrS type 1 subfamily. Homodimer.

It is found in the cytoplasm. It catalyses the reaction tRNA(Tyr) + L-tyrosine + ATP = L-tyrosyl-tRNA(Tyr) + AMP + diphosphate + H(+). Catalyzes the attachment of tyrosine to tRNA(Tyr) in a two-step reaction: tyrosine is first activated by ATP to form Tyr-AMP and then transferred to the acceptor end of tRNA(Tyr). This Wolbachia pipientis subsp. Culex pipiens (strain wPip) protein is Tyrosine--tRNA ligase.